A 97-amino-acid chain; its full sequence is CRISPR-associated endoribonuclease Cas2 1 (97 aa).

Asp12 provides a ligand contact to Mg(2+).

The protein belongs to the CRISPR-associated endoribonuclease Cas2 protein family. Homodimer, forms a heterotetramer with a Cas1 homodimer. It depends on Mg(2+) as a cofactor.

Its function is as follows. CRISPR (clustered regularly interspaced short palindromic repeat) is an adaptive immune system that provides protection against mobile genetic elements (viruses, transposable elements and conjugative plasmids). CRISPR clusters contain sequences complementary to antecedent mobile elements and target invading nucleic acids. CRISPR clusters are transcribed and processed into CRISPR RNA (crRNA). Functions as a ssRNA-specific endoribonuclease. Involved in the integration of spacer DNA into the CRISPR cassette. The protein is CRISPR-associated endoribonuclease Cas2 1 of Francisella tularensis subsp. novicida (strain U112).